Consider the following 219-residue polypeptide: Thiopurine S-methyltransferase (219 aa).

Residues tryptophan 10, leucine 45, glutamate 66, and arginine 130 each contribute to the S-adenosyl-L-methionine site.

Belongs to the class I-like SAM-binding methyltransferase superfamily. TPMT family.

It is found in the cytoplasm. The catalysed reaction is S-adenosyl-L-methionine + a thiopurine = S-adenosyl-L-homocysteine + a thiopurine S-methylether.. The protein is Thiopurine S-methyltransferase of Psychrobacter cryohalolentis (strain ATCC BAA-1226 / DSM 17306 / VKM B-2378 / K5).